A 392-amino-acid chain; its full sequence is ADP-ribosylhydrolase ARH1 (392 aa).

Mg(2+)-binding residues include Ser-79, Asp-80, and Asp-81. Substrate is bound at residue Lys-109. The interval 125–127 is substrate; sequence IQT. Gly-159 provides a ligand contact to substrate. Substrate stretches follow at residues 192-194, 309-311, and 315-316; these read HNN, FSG, and SS. 3 residues coordinate Mg(2+): Asp-348, Asp-350, and Ser-351.

Belongs to the ADP-ribosylglycohydrolase family. Monomer. Mg(2+) is required as a cofactor.

It catalyses the reaction N(omega)-(ADP-D-ribosyl)-L-arginyl-[protein] + H2O = ADP-D-ribose + L-arginyl-[protein]. Specifically acts as an arginine mono-ADP-ribosylhydrolase by mediating the removal of mono-ADP-ribose attached to arginine residues on proteins. The protein is ADP-ribosylhydrolase ARH1 (adprh) of Dictyostelium discoideum (Social amoeba).